A 603-amino-acid polypeptide reads, in one-letter code: Aspartate--tRNA(Asp/Asn) ligase (603 aa).

L-aspartate is bound at residue Glu-172. The segment at Gln-196–Lys-199 is aspartate. Arg-218 is an L-aspartate binding site. ATP is bound by residues Arg-218–Glu-220 and Gln-227. His-457 contacts L-aspartate. Glu-491 contributes to the ATP binding site. An L-aspartate-binding site is contributed by Arg-498. Gly-543–Arg-546 contributes to the ATP binding site.

Belongs to the class-II aminoacyl-tRNA synthetase family. Type 1 subfamily. Homodimer.

It is found in the cytoplasm. It carries out the reaction tRNA(Asx) + L-aspartate + ATP = L-aspartyl-tRNA(Asx) + AMP + diphosphate. Functionally, aspartyl-tRNA synthetase with relaxed tRNA specificity since it is able to aspartylate not only its cognate tRNA(Asp) but also tRNA(Asn). Reaction proceeds in two steps: L-aspartate is first activated by ATP to form Asp-AMP and then transferred to the acceptor end of tRNA(Asp/Asn). This Laribacter hongkongensis (strain HLHK9) protein is Aspartate--tRNA(Asp/Asn) ligase.